A 1387-amino-acid chain; its full sequence is DNA-directed RNA polymerase subunit beta (1387 aa).

This sequence belongs to the RNA polymerase beta chain family. In terms of assembly, the RNAP catalytic core consists of 2 alpha, 1 beta, 1 beta' and 1 omega subunit. When a sigma factor is associated with the core the holoenzyme is formed, which can initiate transcription.

The enzyme catalyses RNA(n) + a ribonucleoside 5'-triphosphate = RNA(n+1) + diphosphate. DNA-dependent RNA polymerase catalyzes the transcription of DNA into RNA using the four ribonucleoside triphosphates as substrates. This is DNA-directed RNA polymerase subunit beta from Xanthomonas campestris pv. campestris (strain ATCC 33913 / DSM 3586 / NCPPB 528 / LMG 568 / P 25).